Reading from the N-terminus, the 132-residue chain is Small ribosomal subunit protein uS8 (132 aa).

The protein belongs to the universal ribosomal protein uS8 family. As to quaternary structure, part of the 30S ribosomal subunit. Contacts proteins S5 and S12.

In terms of biological role, one of the primary rRNA binding proteins, it binds directly to 16S rRNA central domain where it helps coordinate assembly of the platform of the 30S subunit. The polypeptide is Small ribosomal subunit protein uS8 (Rhizobium johnstonii (strain DSM 114642 / LMG 32736 / 3841) (Rhizobium leguminosarum bv. viciae)).